Here is a 558-residue protein sequence, read N- to C-terminus: Urocanate hydratase (558 aa).

NAD(+)-binding positions include 54–55, Q132, 178–180, E198, 244–245, 265–269, 275–276, and Y324; these read GG, GMG, NA, QTSAH, and YL. C412 is an active-site residue. Position 494 (G494) interacts with NAD(+).

Belongs to the urocanase family. It depends on NAD(+) as a cofactor.

The protein resides in the cytoplasm. The enzyme catalyses 4-imidazolone-5-propanoate = trans-urocanate + H2O. It functions in the pathway amino-acid degradation; L-histidine degradation into L-glutamate; N-formimidoyl-L-glutamate from L-histidine: step 2/3. Functionally, catalyzes the conversion of urocanate to 4-imidazolone-5-propionate. This is Urocanate hydratase from Acinetobacter baumannii (strain SDF).